The primary structure comprises 442 residues: FBD-associated F-box protein At1g66310 (442 aa).

Positions 18–64 (VDWLRDLPESLLCHILLNLPTKDVVKTSVLSSKWRNLWRLVPGLDLD) constitute an F-box domain. The FBD domain occupies 363–415 (KRRTSVLSGPRRLLSSLEYVEIESPLTGEVFEMKLVSYLLENSPILKKLTINL).

The polypeptide is FBD-associated F-box protein At1g66310 (Arabidopsis thaliana (Mouse-ear cress)).